We begin with the raw amino-acid sequence, 673 residues long: Flotillin family inner membrane protein sll1021 (673 aa).

The helical transmembrane segment at 60–80 (LLFFPVVIIAVIFLILVTIFL) threads the bilayer. Positions 639–673 (LQDPPSVSPPSAAVSEDDWPDLAPPTETNFSPEEI) are disordered. The span at 664–673 (TETNFSPEEI) shows a compositional bias: polar residues.

The protein belongs to the band 7/mec-2 family. Flotillin subfamily. In terms of assembly, homooligomerizes.

Its subcellular location is the cell inner membrane. The protein resides in the membrane raft. In terms of biological role, found in functional membrane microdomains (FMM) that may be equivalent to eukaryotic membrane rafts. FMMs are highly dynamic and increase in number as cells age. Flotillins are thought to be important factors in membrane fluidity. The sequence is that of Flotillin family inner membrane protein sll1021 from Synechocystis sp. (strain ATCC 27184 / PCC 6803 / Kazusa).